Consider the following 290-residue polypeptide: 4-hydroxy-tetrahydrodipicolinate synthase (290 aa).

Thr-44 is a pyruvate binding site. Tyr-132 acts as the Proton donor/acceptor in catalysis. The active-site Schiff-base intermediate with substrate is Lys-160. Ile-202 is a pyruvate binding site.

Belongs to the DapA family. Homotetramer; dimer of dimers.

It localises to the cytoplasm. The enzyme catalyses L-aspartate 4-semialdehyde + pyruvate = (2S,4S)-4-hydroxy-2,3,4,5-tetrahydrodipicolinate + H2O + H(+). The protein operates within amino-acid biosynthesis; L-lysine biosynthesis via DAP pathway; (S)-tetrahydrodipicolinate from L-aspartate: step 3/4. Catalyzes the condensation of (S)-aspartate-beta-semialdehyde [(S)-ASA] and pyruvate to 4-hydroxy-tetrahydrodipicolinate (HTPA). This Legionella pneumophila (strain Corby) protein is 4-hydroxy-tetrahydrodipicolinate synthase.